The chain runs to 148 residues: MKALIILGLVLLSVTVQGKIFERCELARTLKKLGLDGYKGVSLANWVCLAKWESGYNTDATNYNPGDESTDYGIFQINSRYWCNNGKTPGAVNACHISCNALLQNNIADAVACAKRVVSDPQGIRAWVAWKKHCQNRDVSQYVEGCGV.

The first 18 residues, 1-18, serve as a signal peptide directing secretion; sequence MKALIILGLVLLSVTVQG. The C-type lysozyme domain maps to 19–148; sequence KIFERCELAR…VSQYVEGCGV (130 aa). 4 cysteine pairs are disulfide-bonded: Cys-24–Cys-146, Cys-48–Cys-134, Cys-83–Cys-99, and Cys-95–Cys-113. Active-site residues include Glu-53 and Asp-71.

It belongs to the glycosyl hydrolase 22 family. In terms of assembly, monomer.

The enzyme catalyses Hydrolysis of (1-&gt;4)-beta-linkages between N-acetylmuramic acid and N-acetyl-D-glucosamine residues in a peptidoglycan and between N-acetyl-D-glucosamine residues in chitodextrins.. Lysozymes have primarily a bacteriolytic function; those in tissues and body fluids are associated with the monocyte-macrophage system and enhance the activity of immunoagents. In Colobus angolensis (Angolan colobus), this protein is Lysozyme C (LYZ).